The following is a 314-amino-acid chain: Methionyl-tRNA formyltransferase (314 aa).

Ser111–Pro114 serves as a coordination point for (6S)-5,6,7,8-tetrahydrofolate.

This sequence belongs to the Fmt family.

It catalyses the reaction L-methionyl-tRNA(fMet) + (6R)-10-formyltetrahydrofolate = N-formyl-L-methionyl-tRNA(fMet) + (6S)-5,6,7,8-tetrahydrofolate + H(+). Its function is as follows. Attaches a formyl group to the free amino group of methionyl-tRNA(fMet). The formyl group appears to play a dual role in the initiator identity of N-formylmethionyl-tRNA by promoting its recognition by IF2 and preventing the misappropriation of this tRNA by the elongation apparatus. In Coxiella burnetii (strain CbuG_Q212) (Coxiella burnetii (strain Q212)), this protein is Methionyl-tRNA formyltransferase.